Reading from the N-terminus, the 347-residue chain is Epimerase family protein SDR39U1 homolog, chloroplastic (347 aa).

The N-terminal 37 residues, 1-37 (MELLCSPTSLSSSFALSSALLVPRSFSMPGTRRFMVL), are a transit peptide targeting the chloroplast. NADP(+) is bound by residues 54 to 57 (TGFI), 76 to 77 (TR), 115 to 119 (LAGLP), and Arg-136.

In terms of assembly, can form homodimers. Expressed in leaves, stems and flower buds.

Its subcellular location is the plastid. It localises to the chloroplast inner membrane. The protein resides in the chloroplast. Its function is as follows. Putative NADP-dependent oxidoreductase that acts as a positive regulator of chloroplast division. May play a role at an early stage of the division process. The sequence is that of Epimerase family protein SDR39U1 homolog, chloroplastic from Arabidopsis thaliana (Mouse-ear cress).